A 291-amino-acid chain; its full sequence is Proteasome subunit beta (291 aa).

Residues 1–56 (MTRSFPDRLPTNLAFPGISVINQSSFVDLLRRQAPELLPVSLGGGQSGGGQQLSHG) constitute a propeptide, removed in mature form; by autocatalysis. Catalysis depends on Thr57, which acts as the Nucleophile.

It belongs to the peptidase T1B family. In terms of assembly, the 20S proteasome core is composed of 14 alpha and 14 beta subunits that assemble into four stacked heptameric rings, resulting in a barrel-shaped structure. The two inner rings, each composed of seven catalytic beta subunits, are sandwiched by two outer rings, each composed of seven alpha subunits. The catalytic chamber with the active sites is on the inside of the barrel. Has a gated structure, the ends of the cylinder being occluded by the N-termini of the alpha-subunits. Is capped by the proteasome-associated ATPase, ARC.

The protein localises to the cytoplasm. It catalyses the reaction Cleavage of peptide bonds with very broad specificity.. It participates in protein degradation; proteasomal Pup-dependent pathway. The formation of the proteasomal ATPase ARC-20S proteasome complex, likely via the docking of the C-termini of ARC into the intersubunit pockets in the alpha-rings, may trigger opening of the gate for substrate entry. Interconversion between the open-gate and close-gate conformations leads to a dynamic regulation of the 20S proteasome proteolysis activity. In terms of biological role, component of the proteasome core, a large protease complex with broad specificity involved in protein degradation. The polypeptide is Proteasome subunit beta (Mycobacterium leprae (strain Br4923)).